A 44-amino-acid chain; its full sequence is Antibacterial protein 3 (44 aa).

Met1 is subject to N-formylmethionine.

Belongs to the staphylococcal hemolytic protein family.

It localises to the secreted. In terms of biological role, has hemolytic activity and also inhibits the growth of gonococci. The polypeptide is Antibacterial protein 3 (Staphylococcus haemolyticus).